A 258-amino-acid polypeptide reads, in one-letter code: Glutamate racemase (258 aa).

Substrate is bound by residues 11–12 (DS) and 43–44 (YG). The active-site Proton donor/acceptor is the Cys74. Residue 75–76 (NT) participates in substrate binding. Catalysis depends on Cys187, which acts as the Proton donor/acceptor. 188–189 (TH) contacts substrate.

The protein belongs to the aspartate/glutamate racemases family.

The catalysed reaction is L-glutamate = D-glutamate. Its pathway is cell wall biogenesis; peptidoglycan biosynthesis. Its function is as follows. Provides the (R)-glutamate required for cell wall biosynthesis. The protein is Glutamate racemase of Bifidobacterium adolescentis (strain ATCC 15703 / DSM 20083 / NCTC 11814 / E194a).